The chain runs to 370 residues: Cobalt-precorrin-5B C(1)-methyltransferase (370 aa).

The protein belongs to the CbiD family.

The catalysed reaction is Co-precorrin-5B + S-adenosyl-L-methionine = Co-precorrin-6A + S-adenosyl-L-homocysteine. The protein operates within cofactor biosynthesis; adenosylcobalamin biosynthesis; cob(II)yrinate a,c-diamide from sirohydrochlorin (anaerobic route): step 6/10. Its function is as follows. Catalyzes the methylation of C-1 in cobalt-precorrin-5B to form cobalt-precorrin-6A. The polypeptide is Cobalt-precorrin-5B C(1)-methyltransferase (Pseudomonas savastanoi pv. phaseolicola (strain 1448A / Race 6) (Pseudomonas syringae pv. phaseolicola (strain 1448A / Race 6))).